The sequence spans 92 residues: Acylphosphatase (92 aa).

An Acylphosphatase-like domain is found at 5–90 (TYRLVICGLV…GDFVGFQLRE (86 aa)). Active-site residues include Arg-20 and Asn-38.

Belongs to the acylphosphatase family.

The catalysed reaction is an acyl phosphate + H2O = a carboxylate + phosphate + H(+). The chain is Acylphosphatase (acyP) from Albidiferax ferrireducens (strain ATCC BAA-621 / DSM 15236 / T118) (Rhodoferax ferrireducens).